Here is a 256-residue protein sequence, read N- to C-terminus: 5'-nucleotidase SurE (256 aa).

A divalent metal cation is bound by residues aspartate 9, aspartate 10, serine 42, and asparagine 95.

Belongs to the SurE nucleotidase family. The cofactor is a divalent metal cation.

It localises to the cytoplasm. It carries out the reaction a ribonucleoside 5'-phosphate + H2O = a ribonucleoside + phosphate. Nucleotidase that shows phosphatase activity on nucleoside 5'-monophosphates. This chain is 5'-nucleotidase SurE, found in Campylobacter curvus (strain 525.92).